Reading from the N-terminus, the 427-residue chain is Histidinol dehydrogenase (427 aa).

Residues Tyr125, Gln186, and Asn209 each contribute to the NAD(+) site. The substrate site is built by Ser234, Gln256, and His259. Zn(2+)-binding residues include Gln256 and His259. Active-site proton acceptor residues include Glu325 and His326. Substrate is bound by residues His326, Asp359, Glu413, and His419. Position 359 (Asp359) interacts with Zn(2+). His419 provides a ligand contact to Zn(2+).

It belongs to the histidinol dehydrogenase family. It depends on Zn(2+) as a cofactor.

The enzyme catalyses L-histidinol + 2 NAD(+) + H2O = L-histidine + 2 NADH + 3 H(+). Its pathway is amino-acid biosynthesis; L-histidine biosynthesis; L-histidine from 5-phospho-alpha-D-ribose 1-diphosphate: step 9/9. Catalyzes the sequential NAD-dependent oxidations of L-histidinol to L-histidinaldehyde and then to L-histidine. The protein is Histidinol dehydrogenase of Leptospira interrogans serogroup Icterohaemorrhagiae serovar Lai (strain 56601).